Consider the following 170-residue polypeptide: Protein SprT (170 aa).

The SprT-like domain maps to 23-165; that stretch reads QLANQHLGTD…RECGEKLQFV (143 aa). A Zn(2+)-binding site is contributed by His-78. Glu-79 is a catalytic residue. Residue His-82 coordinates Zn(2+).

The protein belongs to the SprT family. Zn(2+) is required as a cofactor.

It is found in the cytoplasm. This chain is Protein SprT, found in Yersinia enterocolitica serotype O:8 / biotype 1B (strain NCTC 13174 / 8081).